A 281-amino-acid polypeptide reads, in one-letter code: Pantothenate synthetase (281 aa).

30–37 (MGYLHEGH) contacts ATP. Catalysis depends on histidine 37, which acts as the Proton donor. Glutamine 61 is a (R)-pantoate binding site. Glutamine 61 serves as a coordination point for beta-alanine. 147-150 (GQKD) contributes to the ATP binding site. Glutamine 153 is a (R)-pantoate binding site. ATP contacts are provided by residues valine 176 and 184 to 187 (MSSR).

Belongs to the pantothenate synthetase family. In terms of assembly, homodimer.

The protein localises to the cytoplasm. The enzyme catalyses (R)-pantoate + beta-alanine + ATP = (R)-pantothenate + AMP + diphosphate + H(+). Its pathway is cofactor biosynthesis; (R)-pantothenate biosynthesis; (R)-pantothenate from (R)-pantoate and beta-alanine: step 1/1. Its function is as follows. Catalyzes the condensation of pantoate with beta-alanine in an ATP-dependent reaction via a pantoyl-adenylate intermediate. In Caldicellulosiruptor saccharolyticus (strain ATCC 43494 / DSM 8903 / Tp8T 6331), this protein is Pantothenate synthetase.